The sequence spans 238 residues: Peptidyl-tRNA hydrolase (238 aa).

Tyrosine 14 lines the tRNA pocket. The Proton acceptor role is filled by histidine 19. 3 residues coordinate tRNA: phenylalanine 64, asparagine 66, and asparagine 112. Residues 190-202 (KTEEPAPKPEKKT) show a composition bias toward basic and acidic residues. The tract at residues 190–225 (KTEEPAPKPEKKTVAKSHIHQARNHNQPRMPESGPM) is disordered. A compositionally biased stretch (basic residues) spans 203–212 (VAKSHIHQAR).

It belongs to the PTH family. In terms of assembly, monomer.

Its subcellular location is the cytoplasm. It carries out the reaction an N-acyl-L-alpha-aminoacyl-tRNA + H2O = an N-acyl-L-amino acid + a tRNA + H(+). In terms of biological role, hydrolyzes ribosome-free peptidyl-tRNAs (with 1 or more amino acids incorporated), which drop off the ribosome during protein synthesis, or as a result of ribosome stalling. Its function is as follows. Catalyzes the release of premature peptidyl moieties from peptidyl-tRNA molecules trapped in stalled 50S ribosomal subunits, and thus maintains levels of free tRNAs and 50S ribosomes. This chain is Peptidyl-tRNA hydrolase, found in Rhizobium rhizogenes (strain K84 / ATCC BAA-868) (Agrobacterium radiobacter).